Consider the following 280-residue polypeptide: 4-diphosphocytidyl-2-C-methyl-D-erythritol kinase (280 aa).

K11 is an active-site residue. Residue 95–105 (PVGAGLGGGSS) coordinates ATP. Residue D137 is part of the active site.

Belongs to the GHMP kinase family. IspE subfamily.

The catalysed reaction is 4-CDP-2-C-methyl-D-erythritol + ATP = 4-CDP-2-C-methyl-D-erythritol 2-phosphate + ADP + H(+). The protein operates within isoprenoid biosynthesis; isopentenyl diphosphate biosynthesis via DXP pathway; isopentenyl diphosphate from 1-deoxy-D-xylulose 5-phosphate: step 3/6. Catalyzes the phosphorylation of the position 2 hydroxy group of 4-diphosphocytidyl-2C-methyl-D-erythritol. The chain is 4-diphosphocytidyl-2-C-methyl-D-erythritol kinase from Geobacter sp. (strain M21).